We begin with the raw amino-acid sequence, 314 residues long: tRNA dimethylallyltransferase (314 aa).

9 to 16 is a binding site for ATP; it reads GPTAVGKT. Position 11–16 (11–16) interacts with substrate; that stretch reads TAVGKT. The interaction with substrate tRNA stretch occupies residues 34–37; it reads DSMQ.

This sequence belongs to the IPP transferase family. Monomer. The cofactor is Mg(2+).

The enzyme catalyses adenosine(37) in tRNA + dimethylallyl diphosphate = N(6)-dimethylallyladenosine(37) in tRNA + diphosphate. Catalyzes the transfer of a dimethylallyl group onto the adenine at position 37 in tRNAs that read codons beginning with uridine, leading to the formation of N6-(dimethylallyl)adenosine (i(6)A). This is tRNA dimethylallyltransferase from Clostridium tetani (strain Massachusetts / E88).